The chain runs to 367 residues: Glutamate 5-kinase (367 aa).

Lys10 lines the ATP pocket. Residues Ser50, Asp137, and Asn149 each contribute to the substrate site. ATP-binding positions include 169–170 and 211–217; these read TD and TGGMSTK. Residues 275–353 form the PUA domain; it reads AGEITVDEGA…QEIDAILGYE (79 aa).

This sequence belongs to the glutamate 5-kinase family.

The protein localises to the cytoplasm. The enzyme catalyses L-glutamate + ATP = L-glutamyl 5-phosphate + ADP. The protein operates within amino-acid biosynthesis; L-proline biosynthesis; L-glutamate 5-semialdehyde from L-glutamate: step 1/2. In terms of biological role, catalyzes the transfer of a phosphate group to glutamate to form L-glutamate 5-phosphate. The protein is Glutamate 5-kinase of Shigella flexneri.